Consider the following 82-residue polypeptide: Small ribosomal subunit protein bS16 (82 aa).

The protein belongs to the bacterial ribosomal protein bS16 family.

The sequence is that of Small ribosomal subunit protein bS16 from Clostridium botulinum (strain ATCC 19397 / Type A).